A 165-amino-acid polypeptide reads, in one-letter code: Peptide methionine sulfoxide reductase MsrA (165 aa).

Residue Cys-10 is part of the active site.

Belongs to the MsrA Met sulfoxide reductase family.

The enzyme catalyses L-methionyl-[protein] + [thioredoxin]-disulfide + H2O = L-methionyl-(S)-S-oxide-[protein] + [thioredoxin]-dithiol. The catalysed reaction is [thioredoxin]-disulfide + L-methionine + H2O = L-methionine (S)-S-oxide + [thioredoxin]-dithiol. Its function is as follows. Has an important function as a repair enzyme for proteins that have been inactivated by oxidation. Catalyzes the reversible oxidation-reduction of methionine sulfoxide in proteins to methionine. The chain is Peptide methionine sulfoxide reductase MsrA from Campylobacter jejuni subsp. jejuni serotype O:23/36 (strain 81-176).